Consider the following 560-residue polypeptide: Terminal uridylyltransferase Tailor (560 aa).

The disordered stretch occupies residues 169–197 (EQHPKPNPNNQPVQPHPTHQTKQEKKQAQ). Residues 176-188 (PNNQPVQPHPTHQ) are compositionally biased toward low complexity. Residues D278 and D280 each contribute to the Mg(2+) site. In terms of domain architecture, PAP-associated spans 455-522 (LRNFFAYFAK…VVQDPIQLNH (68 aa)).

Requires Mg(2+) as cofactor.

The protein resides in the cytoplasm. The enzyme catalyses RNA(n) + UTP = RNA(n)-3'-uridine ribonucleotide + diphosphate. Functionally, uridylyltransferase which mediates terminal uridylation of miRNAs, leading to their degradation. Has high specificity for splicing-derived miRNAs (mirtrons) and other miRNA substrates containing a 3'-G terminal nucleotide. Appears to be a major suppressor of mirtron biogenesis. This is Terminal uridylyltransferase Tailor from Drosophila melanogaster (Fruit fly).